A 203-amino-acid polypeptide reads, in one-letter code: Urease accessory protein UreG (203 aa).

11–18 (GPVGSGKT) contacts GTP.

Belongs to the SIMIBI class G3E GTPase family. UreG subfamily. Homodimer. UreD, UreF and UreG form a complex that acts as a GTP-hydrolysis-dependent molecular chaperone, activating the urease apoprotein by helping to assemble the nickel containing metallocenter of UreC. The UreE protein probably delivers the nickel.

It localises to the cytoplasm. Facilitates the functional incorporation of the urease nickel metallocenter. This process requires GTP hydrolysis, probably effectuated by UreG. In Prochlorococcus marinus (strain MIT 9312), this protein is Urease accessory protein UreG.